The following is a 558-amino-acid chain: Ribonuclease J (558 aa).

Zn(2+)-binding residues include His-81, His-83, Asp-85, His-86, His-148, and Asp-170. Position 371 to 375 (371 to 375 (HVSGH)) interacts with substrate. His-397 is a Zn(2+) binding site.

This sequence belongs to the metallo-beta-lactamase superfamily. RNA-metabolizing metallo-beta-lactamase-like family. Bacterial RNase J subfamily. In terms of assembly, homodimer, may be a subunit of the RNA degradosome. Zn(2+) serves as cofactor.

Its subcellular location is the cytoplasm. Its function is as follows. An RNase that has 5'-3' exonuclease and possibly endoonuclease activity. Involved in maturation of rRNA and in some organisms also mRNA maturation and/or decay. This chain is Ribonuclease J, found in Mycobacterium tuberculosis (strain CDC 1551 / Oshkosh).